The sequence spans 394 residues: ATP phosphoribosyltransferase regulatory subunit (394 aa).

It belongs to the class-II aminoacyl-tRNA synthetase family. HisZ subfamily. Heteromultimer composed of HisG and HisZ subunits.

Its subcellular location is the cytoplasm. It participates in amino-acid biosynthesis; L-histidine biosynthesis; L-histidine from 5-phospho-alpha-D-ribose 1-diphosphate: step 1/9. In terms of biological role, required for the first step of histidine biosynthesis. May allow the feedback regulation of ATP phosphoribosyltransferase activity by histidine. This is ATP phosphoribosyltransferase regulatory subunit from Pseudomonas aeruginosa (strain LESB58).